The chain runs to 79 residues: Putative antitoxin VapB12 (79 aa).

Belongs to the UPF0330 family.

Possibly the antitoxin component of a type II toxin-antitoxin (TA) system. Its cognate toxin is VapC12 (Potential). In Sulfurisphaera tokodaii (strain DSM 16993 / JCM 10545 / NBRC 100140 / 7) (Sulfolobus tokodaii), this protein is Putative antitoxin VapB12 (vapB12).